Here is a 284-residue protein sequence, read N- to C-terminus: NH(3)-dependent NAD(+) synthetase (284 aa).

Position 41–48 (41–48) interacts with ATP; it reads GLSGGVDS. Residue aspartate 47 participates in Mg(2+) binding. Arginine 127 is a deamido-NAD(+) binding site. An ATP-binding site is contributed by threonine 147. Glutamate 152 contacts Mg(2+). Aspartate 167 is a binding site for deamido-NAD(+). ATP contacts are provided by lysine 176 and serine 199. The interval 264-284 is disordered; it reads FKRRPAPGLDLPEPEDPAMSG. Acidic residues predominate over residues 275–284; the sequence is PEPEDPAMSG.

Belongs to the NAD synthetase family. Homodimer.

The enzyme catalyses deamido-NAD(+) + NH4(+) + ATP = AMP + diphosphate + NAD(+) + H(+). The protein operates within cofactor biosynthesis; NAD(+) biosynthesis; NAD(+) from deamido-NAD(+) (ammonia route): step 1/1. Its function is as follows. Catalyzes the ATP-dependent amidation of deamido-NAD to form NAD. Uses ammonia as a nitrogen source. The protein is NH(3)-dependent NAD(+) synthetase of Methanopyrus kandleri (strain AV19 / DSM 6324 / JCM 9639 / NBRC 100938).